We begin with the raw amino-acid sequence, 675 residues long: DNA gyrase subunit B (675 aa).

One can recognise a Toprim domain in the interval 453-567 (SELYVVEGDS…NGHVFLAQPP (115 aa)). Mg(2+)-binding residues include Glu-459, Asp-532, and Asp-534.

It belongs to the type II topoisomerase GyrB family. Heterotetramer, composed of two GyrA and two GyrB chains. In the heterotetramer, GyrA contains the active site tyrosine that forms a transient covalent intermediate with DNA, while GyrB binds cofactors and catalyzes ATP hydrolysis. It depends on Mg(2+) as a cofactor. Mn(2+) serves as cofactor. The cofactor is Ca(2+).

It localises to the cytoplasm. The enzyme catalyses ATP-dependent breakage, passage and rejoining of double-stranded DNA.. Functionally, a type II topoisomerase that negatively supercoils closed circular double-stranded (ds) DNA in an ATP-dependent manner to modulate DNA topology and maintain chromosomes in an underwound state. Negative supercoiling favors strand separation, and DNA replication, transcription, recombination and repair, all of which involve strand separation. Also able to catalyze the interconversion of other topological isomers of dsDNA rings, including catenanes and knotted rings. Type II topoisomerases break and join 2 DNA strands simultaneously in an ATP-dependent manner. The chain is DNA gyrase subunit B from Mycobacterium tuberculosis (strain ATCC 25177 / H37Ra).